A 225-amino-acid chain; its full sequence is Putative elongation factor 1 gamma homolog (225 aa).

Residues 94–225 form the GST C-terminal domain; the sequence is DFKTRADILR…MCETEMQPIK (132 aa).

This chain is Putative elongation factor 1 gamma homolog, found in Saccharomyces cerevisiae (strain ATCC 204508 / S288c) (Baker's yeast).